A 59-amino-acid chain; its full sequence is UPF0337 protein PP_4561 (59 aa).

Positions 27–43 (TDNEKLRAEGKAQELKG) are enriched in basic and acidic residues. A disordered region spans residues 27 to 59 (TDNEKLRAEGKAQELKGEAQQVKGNVKDAVKKP).

It belongs to the UPF0337 (CsbD) family.

This Pseudomonas putida (strain ATCC 47054 / DSM 6125 / CFBP 8728 / NCIMB 11950 / KT2440) protein is UPF0337 protein PP_4561.